A 259-amino-acid chain; its full sequence is Ubiquinone/menaquinone biosynthesis C-methyltransferase UbiE (259 aa).

Residues T82, D103, 131 to 132, and S148 contribute to the S-adenosyl-L-methionine site; that span reads NA.

Belongs to the class I-like SAM-binding methyltransferase superfamily. MenG/UbiE family.

The catalysed reaction is a 2-demethylmenaquinol + S-adenosyl-L-methionine = a menaquinol + S-adenosyl-L-homocysteine + H(+). The enzyme catalyses a 2-methoxy-6-(all-trans-polyprenyl)benzene-1,4-diol + S-adenosyl-L-methionine = a 5-methoxy-2-methyl-3-(all-trans-polyprenyl)benzene-1,4-diol + S-adenosyl-L-homocysteine + H(+). It functions in the pathway quinol/quinone metabolism; menaquinone biosynthesis; menaquinol from 1,4-dihydroxy-2-naphthoate: step 2/2. The protein operates within cofactor biosynthesis; ubiquinone biosynthesis. Functionally, methyltransferase required for the conversion of demethylmenaquinol (DMKH2) to menaquinol (MKH2) and the conversion of 2-polyprenyl-6-methoxy-1,4-benzoquinol (DDMQH2) to 2-polyprenyl-3-methyl-6-methoxy-1,4-benzoquinol (DMQH2). The chain is Ubiquinone/menaquinone biosynthesis C-methyltransferase UbiE from Vibrio campbellii (strain ATCC BAA-1116).